A 479-amino-acid chain; its full sequence is Proline--tRNA ligase (479 aa).

The protein belongs to the class-II aminoacyl-tRNA synthetase family. ProS type 3 subfamily. In terms of assembly, homodimer.

It localises to the cytoplasm. The catalysed reaction is tRNA(Pro) + L-proline + ATP = L-prolyl-tRNA(Pro) + AMP + diphosphate. Catalyzes the attachment of proline to tRNA(Pro) in a two-step reaction: proline is first activated by ATP to form Pro-AMP and then transferred to the acceptor end of tRNA(Pro). This chain is Proline--tRNA ligase, found in Mesomycoplasma hyopneumoniae (strain 7448) (Mycoplasma hyopneumoniae).